A 405-amino-acid polypeptide reads, in one-letter code: Pulcherriminic acid synthase (405 aa).

The heme site is built by lysine 62, asparagine 229, arginine 285, and cysteine 353.

The protein belongs to the cytochrome P450 family. Homodimer. Requires heme as cofactor.

The catalysed reaction is cyclo(L-leucyl-L-leucyl) + 6 reduced [2Fe-2S]-[ferredoxin] + 3 O2 + 4 H(+) = pulcherriminic acid + 6 oxidized [2Fe-2S]-[ferredoxin] + 4 H2O. Functionally, involved in the biosynthesis of pulcherrimin, a red extracellular pigment. Catalyzes the oxidation of cyclo(L-Leu-L-Leu) (cLL) to yield pulcherriminic acid which forms pulcherrimin via a nonenzymic reaction with Fe(3+). Substrates with small alkyl groups (cAA, cLG, cLP) exhibit weaker binding to CYP134A1, but substrates with larger hydrophobic side chains bind in a similar regime to cLL. This chain is Pulcherriminic acid synthase (cypX), found in Bacillus subtilis (strain 168).